Reading from the N-terminus, the 27-residue chain is Vasotocin-neurophysin VT (27 aa).

Cysteine 1 and cysteine 6 are disulfide-bonded. Glycine 9 carries the post-translational modification Glycine amide.

The protein belongs to the vasopressin/oxytocin family.

In terms of biological role, vasotocin is an antidiuretic hormone. The sequence is that of Vasotocin-neurophysin VT from Sclerophrys regularis (Common African toad).